The chain runs to 234 residues: Accessory gland protein Acp29AB (234 aa).

The first 21 residues, 1 to 21 (MYATNLLYLLALWNLWLVSGG), serve as a signal peptide directing secretion. N-linked (GlcNAc...) asparagine glycans are attached at residues Asn-29, Asn-61, Asn-127, and Asn-164. A C-type lectin domain is found at 137 to 234 (VTCREMNGHL…SFVCQANQWA (98 aa)). Cystine bridges form between Cys-139–Cys-228 and Cys-207–Cys-220.

It localises to the secreted. In terms of biological role, responsible for physiological and behavioral changes in mated female flies. The sequence is that of Accessory gland protein Acp29AB (Acp29AB) from Drosophila simulans (Fruit fly).